The following is a 509-amino-acid chain: Maturase K (509 aa).

This sequence belongs to the intron maturase 2 family. MatK subfamily.

The protein localises to the plastid. The protein resides in the chloroplast. In terms of biological role, usually encoded in the trnK tRNA gene intron. Probably assists in splicing its own and other chloroplast group II introns. This Nicotiana bigelovii (Bigelov's tobacco) protein is Maturase K.